Here is a 321-residue protein sequence, read N- to C-terminus: Probable DNA polymerase III subunit delta (321 aa).

The protein belongs to the DNA polymerase HolA subunit family. As to quaternary structure, component of the DNA clamp loading complex consisting of tau(3):delta(1):delta'(1). The DNA polymerase III holoenzyme complex contains at least 10 different subunits organized into 3 functionally essential subassemblies: the Pol III core, the beta sliding clamp processivity factor and the clamp-loading complex. The Pol III core (subunits alpha, epsilon and theta) contains the polymerase and the 3'-5' exonuclease proofreading activities. The polymerase is tethered to the template via the dimeric beta sliding clamp processivity factor. The DNA clamp-loading complex assembles the beta sliding clamp onto the primed template and plays a central role in the organization and communication at the replication fork.

It carries out the reaction DNA(n) + a 2'-deoxyribonucleoside 5'-triphosphate = DNA(n+1) + diphosphate. Part of the beta sliding clamp loading complex, which hydrolyzes ATP to load the beta clamp onto primed DNA to form the DNA replication pre-initiation complex. DNA polymerase III is a complex, multichain enzyme responsible for most of the replicative synthesis in bacteria. This DNA polymerase also exhibits 3'-5' exonuclease activity. The delta subunit is the wrench that will open the beta subunit dimer. The DNA clamp loading complex (tau(3),delta,delta') is thought to load beta dimers onto DNA by binding ATP which alters the complex's conformation so it can bind beta sliding clamp dimers and open them at one interface. Primed DNA is recognized, ATP is hydrolyzed releasing the clamp loading complex and closing the beta sliding clamp ring around the primed DNA. This chain is Probable DNA polymerase III subunit delta, found in Rickettsia prowazekii (strain Madrid E).